Here is an 877-residue protein sequence, read N- to C-terminus: Alanine--tRNA ligase (877 aa).

Zn(2+)-binding residues include histidine 563, histidine 567, cysteine 665, and histidine 669.

The protein belongs to the class-II aminoacyl-tRNA synthetase family. Zn(2+) is required as a cofactor.

Its subcellular location is the cytoplasm. The enzyme catalyses tRNA(Ala) + L-alanine + ATP = L-alanyl-tRNA(Ala) + AMP + diphosphate. Catalyzes the attachment of alanine to tRNA(Ala) in a two-step reaction: alanine is first activated by ATP to form Ala-AMP and then transferred to the acceptor end of tRNA(Ala). Also edits incorrectly charged Ser-tRNA(Ala) and Gly-tRNA(Ala) via its editing domain. This chain is Alanine--tRNA ligase, found in Thermoanaerobacter pseudethanolicus (strain ATCC 33223 / 39E) (Clostridium thermohydrosulfuricum).